A 364-amino-acid chain; its full sequence is Oxidized low-density lipoprotein receptor 1 (364 aa).

Residues 1 to 21 (MAFDDKMKPVNGQPDQKSCGK) form a disordered region. The Cytoplasmic segment spans residues 1 to 31 (MAFDDKMKPVNGQPDQKSCGKKPKGLHLLSS). The chain crosses the membrane as a helical; Signal-anchor for type II membrane protein span at residues 32–54 (TWWCPAAVTLAILCLVLSVTLIV). 2 S-palmitoyl cysteine lipidation sites follow: cysteine 35 and cysteine 45. The tract at residues 55–242 (QQTQLLQVSD…GPCPQDWIWH (188 aa)) is neck. Residues 55–364 (QQTQLLQVSD…QKKANLLLTQ (310 aa)) are Extracellular-facing. 3 N-linked (GlcNAc...) asparagine glycosylation sites follow: asparagine 72, asparagine 92, and asparagine 138. The stretch at 83–233 (QMSAQKKAEN…ALQRAANSSG (151 aa)) forms a coiled coil. 3 consecutive repeat copies span residues 96–141 (ESKR…NASE), 142–187 (ESKW…KYSE), and 188–233 (ESQR…NSSG). Disulfide bonds link cysteine 235/cysteine 246, cysteine 262/cysteine 354, and cysteine 333/cysteine 346. The region spanning 242 to 355 (HKENCYLFHG…CILTAFSICQ (114 aa)) is the C-type lectin domain.

As to quaternary structure, homodimer; disulfide-linked. May form a hexamer composed of 3 homodimers. Interacts with HSP70. Post-translationally, N-glycosylated. In terms of tissue distribution, predominantly expressed in lung and at lower level in kidney. Expressed in macrophages but not in vascular smooth muscle cells.

It is found in the cell membrane. The protein localises to the membrane raft. It localises to the secreted. Its function is as follows. Receptor that mediates the recognition, internalization and degradation of oxidatively modified low density lipoprotein (oxLDL) by vascular endothelial cells. OxLDL is a marker of atherosclerosis that induces vascular endothelial cell activation and dysfunction, resulting in pro-inflammatory responses, pro-oxidative conditions and apoptosis. Its association with oxLDL induces the activation of NF-kappa-B through an increased production of intracellular reactive oxygen and a variety of pro-atherogenic cellular responses including a reduction of nitric oxide (NO) release, monocyte adhesion and apoptosis. In addition to binding oxLDL, it acts as a receptor for the HSP70 protein involved in antigen cross-presentation to naive T-cells in dendritic cells, thereby participating in cell-mediated antigen cross-presentation. Also involved in inflammatory process, by acting as a leukocyte-adhesion molecule at the vascular interface in endotoxin-induced inflammation. Also acts as a receptor for advanced glycation end (AGE) products, activated platelets, monocytes, apoptotic cells and both Gram-negative and Gram-positive bacteria. The polypeptide is Oxidized low-density lipoprotein receptor 1 (Olr1) (Rattus norvegicus (Rat)).